The primary structure comprises 210 residues: Large ribosomal subunit protein uL3 (210 aa).

The protein belongs to the universal ribosomal protein uL3 family. In terms of assembly, part of the 50S ribosomal subunit. Forms a cluster with proteins L14 and L19.

One of the primary rRNA binding proteins, it binds directly near the 3'-end of the 23S rRNA, where it nucleates assembly of the 50S subunit. This is Large ribosomal subunit protein uL3 from Caldicellulosiruptor bescii (strain ATCC BAA-1888 / DSM 6725 / KCTC 15123 / Z-1320) (Anaerocellum thermophilum).